Reading from the N-terminus, the 861-residue chain is Replication factor C subunit 1 (861 aa).

Residues 1 to 103 (MVNISDFFGK…SSKSSDSASN (103 aa)) are disordered. The span at 16–28 (RSSTSRPTRQVGS) shows a compositional bias: polar residues. At Thr-38 the chain carries Phosphothreonine. At Ser-40 the chain carries Phosphoserine. Thr-63 is modified (phosphothreonine). Positions 153 to 243 (GKPNCLLGLT…PAEGGDGEAA (91 aa)) constitute a BRCT domain. Residues Thr-299, Cys-311, 353-361 (GPPGIGKTT), and Asn-456 each bind ATP. The disordered stretch occupies residues 788-861 (STIGGGGVGT…GGSKKRKTKA (74 aa)). Positions 803–823 (DFEDVVDADDNPVPADDEETQ) are enriched in acidic residues. 2 short sequence motifs (nuclear localization signal) span residues 830 to 834 (KKDKL) and 855 to 860 (KKRKTK). Basic residues predominate over residues 836–861 (KQKAKPTKRKTATSKPGGSKKRKTKA).

It belongs to the activator 1 large subunit family. Replication factor C (RFC) is a heteropentamer of subunits RFC1, RFC2, RFC3, RFC4 and RFC5 and forms a complex with POL30/PCNA in the presence of ATP. Interacts with ECO1 and POL30/PCNA.

It localises to the nucleus. Functionally, component of the ATP-dependent clamp loader RFC complex for the POL30/PCNA homotrimer DNA clamp. During a clamp loading circle, the RFC:clamp complex binds to DNA and the recognition of the double-stranded/single-stranded junction stimulates ATP hydrolysis by RFC. The complex presumably provides bipartite ATP sites in which one subunit supplies a catalytic site for hydrolysis of ATP bound to the neighboring subunit. Dissociation of RFC from the clamp leaves the clamp encircling DNA. Replication factor C (RFC or activator 1) complex acts during elongation of primed DNA templates by DNA polymerase delta and epsilon. RFC has an essential but redundant activity in sister chromatid cohesion establishment. The chain is Replication factor C subunit 1 (RFC1) from Saccharomyces cerevisiae (strain ATCC 204508 / S288c) (Baker's yeast).